The following is a 541-amino-acid chain: Protein wntless homolog (541 aa).

Over Met-1–Cys-15 the chain is Cytoplasmic. Residues Ile-16 to Ala-36 traverse the membrane as a helical segment. Over Pro-37–Lys-232 the chain is Lumenal. The interaction with Wnt proteins stretch occupies residues Met-101 to Lys-232. The helical transmembrane segment at Val-233 to Trp-253 threads the bilayer. At Arg-254–Lys-268 the chain is on the cytoplasmic side. The chain crosses the membrane as a helical span at residues Val-269–Ile-289. The Lumenal segment spans residues Gly-290–Arg-303. The helical transmembrane segment at Gln-304–Met-324 threads the bilayer. Residues Asp-325 to His-331 lie on the Cytoplasmic side of the membrane. The helical transmembrane segment at Ile-332–Phe-352 threads the bilayer. Topologically, residues Asp-353–Ala-380 are lumenal. The helical transmembrane segment at Phe-381–Phe-401 threads the bilayer. The Cytoplasmic portion of the chain corresponds to Gln-402–Arg-431. Residues Phe-432–Val-452 form a helical membrane-spanning segment. Topologically, residues Ser-453 to Ser-471 are lumenal. A helical membrane pass occupies residues Ala-472–Tyr-492. Residues Ala-493–Glu-541 lie on the Cytoplasmic side of the membrane.

The protein belongs to the wntless family. Interacts with WNT3A. Interacts with WNT1, WNT3 and WNT5A. In terms of processing, N-glycosylated.

The protein localises to the golgi apparatus membrane. It is found in the cytoplasmic vesicle membrane. Its subcellular location is the cell membrane. The protein resides in the endoplasmic reticulum membrane. It localises to the early endosome membrane. Functionally, regulates Wnt proteins sorting and secretion in a feedback regulatory mechanism. This reciprocal interaction plays a key role in the regulation of expression, subcellular location, binding and organelle-specific association of Wnt proteins. Plays also an important role in establishment of the anterior-posterior body axis formation during development. This is Protein wntless homolog (WLS) from Homo sapiens (Human).